Here is a 62-residue protein sequence, read N- to C-terminus: Photosystem II reaction center protein Z (62 aa).

2 consecutive transmembrane segments (helical) span residues 8–28 and 41–61; these read AVFA…VVFA and FSGT…NSLI.

This sequence belongs to the PsbZ family. In terms of assembly, PSII is composed of 1 copy each of membrane proteins PsbA, PsbB, PsbC, PsbD, PsbE, PsbF, PsbH, PsbI, PsbJ, PsbK, PsbL, PsbM, PsbT, PsbY, PsbZ, Psb30/Ycf12, at least 3 peripheral proteins of the oxygen-evolving complex and a large number of cofactors. It forms dimeric complexes.

The protein resides in the plastid. It localises to the chloroplast thylakoid membrane. Its function is as follows. May control the interaction of photosystem II (PSII) cores with the light-harvesting antenna, regulates electron flow through the 2 photosystem reaction centers. PSII is a light-driven water plastoquinone oxidoreductase, using light energy to abstract electrons from H(2)O, generating a proton gradient subsequently used for ATP formation. The protein is Photosystem II reaction center protein Z of Pisum sativum (Garden pea).